A 460-amino-acid polypeptide reads, in one-letter code: MFS-type transporter PUL3 (460 aa).

8 consecutive transmembrane segments (helical) span residues Ala16–Val36, Tyr50–Gly70, Trp81–Gly101, Ile113–Ser133, Gly151–Val171, Ala181–Leu201, Met240–Leu260, and Val271–Val291. Residues Pro300–Ser323 are disordered. A compositionally biased stretch (basic and acidic residues) spans Asp310–Ser323. Helical transmembrane passes span Val333 to Ala353, Ile369 to Val389, Phe408 to Tyr428, and Gly433 to Val453.

This sequence belongs to the major facilitator superfamily. TCR/Tet family.

Its subcellular location is the cell membrane. MFS-type transporer required for the uptake of iron via the uptake of the siderophore pulcherrimin-iron complex. This chain is MFS-type transporter PUL3, found in Kluyveromyces lactis (strain ATCC 8585 / CBS 2359 / DSM 70799 / NBRC 1267 / NRRL Y-1140 / WM37) (Yeast).